The following is a 550-amino-acid chain: Dihydroxy-acid dehydratase (550 aa).

D78 serves as a coordination point for Mg(2+). A [2Fe-2S] cluster-binding site is contributed by C119. Residues D120 and K121 each coordinate Mg(2+). K121 bears the N6-carboxylysine mark. Position 191 (C191) interacts with [2Fe-2S] cluster. E440 is a Mg(2+) binding site. The active-site Proton acceptor is the S466.

Belongs to the IlvD/Edd family. In terms of assembly, homodimer. [2Fe-2S] cluster is required as a cofactor. It depends on Mg(2+) as a cofactor.

It catalyses the reaction (2R)-2,3-dihydroxy-3-methylbutanoate = 3-methyl-2-oxobutanoate + H2O. The catalysed reaction is (2R,3R)-2,3-dihydroxy-3-methylpentanoate = (S)-3-methyl-2-oxopentanoate + H2O. It functions in the pathway amino-acid biosynthesis; L-isoleucine biosynthesis; L-isoleucine from 2-oxobutanoate: step 3/4. Its pathway is amino-acid biosynthesis; L-valine biosynthesis; L-valine from pyruvate: step 3/4. Functions in the biosynthesis of branched-chain amino acids. Catalyzes the dehydration of (2R,3R)-2,3-dihydroxy-3-methylpentanoate (2,3-dihydroxy-3-methylvalerate) into 2-oxo-3-methylpentanoate (2-oxo-3-methylvalerate) and of (2R)-2,3-dihydroxy-3-methylbutanoate (2,3-dihydroxyisovalerate) into 2-oxo-3-methylbutanoate (2-oxoisovalerate), the penultimate precursor to L-isoleucine and L-valine, respectively. This chain is Dihydroxy-acid dehydratase, found in Methanococcus maripaludis (strain C5 / ATCC BAA-1333).